The sequence spans 53 residues: MFRWGIIFLVIALIAAALGFGGLAGTAAWAAKVVFVVGIVIFLISLFTGRKKL.

2 helical membrane passes run 4 to 24 and 27 to 47; these read WGII…GGLA and AAWA…ISLF.

This sequence belongs to the UPF0391 family.

The protein localises to the cell membrane. The sequence is that of UPF0391 membrane protein ETA_06630 from Erwinia tasmaniensis (strain DSM 17950 / CFBP 7177 / CIP 109463 / NCPPB 4357 / Et1/99).